A 241-amino-acid chain; its full sequence is Ribose-5-phosphate isomerase A (241 aa).

Residues 29–32, 84–87, and 97–100 each bind substrate; these read TGTT, DGAD, and KGGG. Glu-106 acts as the Proton acceptor in catalysis. Residue Lys-124 coordinates substrate.

Belongs to the ribose 5-phosphate isomerase family. In terms of assembly, homodimer.

It catalyses the reaction aldehydo-D-ribose 5-phosphate = D-ribulose 5-phosphate. Its pathway is carbohydrate degradation; pentose phosphate pathway; D-ribose 5-phosphate from D-ribulose 5-phosphate (non-oxidative stage): step 1/1. In terms of biological role, catalyzes the reversible conversion of ribose-5-phosphate to ribulose 5-phosphate. The protein is Ribose-5-phosphate isomerase A of Thermoplasma acidophilum (strain ATCC 25905 / DSM 1728 / JCM 9062 / NBRC 15155 / AMRC-C165).